The chain runs to 1214 residues: RNA-directed RNA polymerase VP1 (1214 aa).

Residues 610–805 (APHDVMAPQL…KRTIVGNNVA (196 aa)) enclose the RdRp catalytic domain.

Belongs to the reoviridae RNA-directed RNA polymerase family.

The protein localises to the virion. The enzyme catalyses RNA(n) + a ribonucleoside 5'-triphosphate = RNA(n+1) + diphosphate. RNA-directed RNA polymerase that is involved in transcription and genome replication. Following infection, it catalyzes the synthesis of fully conservative plus strands. After core assembly, which consists in recruitment of one capped plus-strand for each genomic segments and polymerase complexes, the polymerase switches mode and catalyzes the synthesis of complementary minus-strands. This chain is RNA-directed RNA polymerase VP1 (Segment-1), found in Banna virus (BAV).